A 334-amino-acid polypeptide reads, in one-letter code: Thioredoxin reductase (334 aa).

FAD contacts are provided by residues 10–13 (SGPA), 39–40 (IA), Q44, N53, V86, C143, D287, and 294–296 (RQA). A disulfide bond links C140 and C143.

The protein belongs to the class-II pyridine nucleotide-disulfide oxidoreductase family. As to quaternary structure, homodimer. It depends on FAD as a cofactor.

It is found in the cytoplasm. The enzyme catalyses [thioredoxin]-dithiol + NADP(+) = [thioredoxin]-disulfide + NADPH + H(+). The sequence is that of Thioredoxin reductase (cys-9) from Neurospora crassa (strain ATCC 24698 / 74-OR23-1A / CBS 708.71 / DSM 1257 / FGSC 987).